The primary structure comprises 562 residues: Protein wntless (562 aa).

The Cytoplasmic segment spans residues 1–13; that stretch reads MSGTILENLSGRK. Residues 14 to 34 traverse the membrane as a helical segment; that stretch reads LSILVGSLLLCQVLCFLLGGL. Over 35–239 the chain is Lumenal; it reads YAPVPAGHTN…AIHQNGGFTH (205 aa). N-linked (GlcNAc...) asparagine glycosylation is present at Asn58. The helical transmembrane segment at 240-260 threads the bilayer; that stretch reads VWLMLKTLLFPFVVGIMVWFW. At 261 to 270 the chain is on the cytoplasmic side; it reads RRVHLLQRSP. The helical transmembrane segment at 271 to 291 threads the bilayer; the sequence is ALLEYMLLYLGGALTFLNLPL. Residues 292–311 are Lumenal-facing; sequence EYLSLTIEMPYMLLLSDIRQ. The helical transmembrane segment at 312–332 threads the bilayer; sequence GIFYAMLLSFWLVFAGEHMLI. The Cytoplasmic portion of the chain corresponds to 333–344; the sequence is QDSSNKSTIRSR. A helical membrane pass occupies residues 345 to 365; that stretch reads YWKHLSAVVVGCISLFVFDIS. Over 366–386 the chain is Lumenal; sequence ERGVQLRNPFYSIWTTPLGAK. Residues 387–407 form a helical membrane-spanning segment; the sequence is VAMSFILLAGVSAAVYFLFLC. Residues 408 to 441 lie on the Cytoplasmic side of the membrane; that stretch reads YMISKVFKNIGDKRTSLPSMSQARRLHYEGLIYR. The helical transmembrane segment at 442-462 threads the bilayer; it reads FKFLMLATLLCAALTVTGFIM. Over 463 to 482 the chain is Lumenal; that stretch reads GQMAEGQWKWNDDVEIQLTS. A helical transmembrane segment spans residues 483–503; sequence AFLTGVYGMWNIYIFALLILY. The Cytoplasmic segment spans residues 504 to 562; it reads APSHKQWPTMHHSDETTQSNENIVASAASEEIEFSNLPSDSNPSEISSLTSFTRKVAFE. Positions 538–562 are disordered; sequence SNLPSDSNPSEISSLTSFTRKVAFE. Positions 539–556 are enriched in polar residues; sequence NLPSDSNPSEISSLTSFT.

It belongs to the wntless family. In terms of assembly, interacts with wg; in the Golgi. Interacts with Vps35, a component of the retromer complex; wls stability is regulated by Vps35.

The protein localises to the presynaptic cell membrane. It is found in the postsynaptic cell membrane. Its subcellular location is the cell membrane. It localises to the endoplasmic reticulum membrane. The protein resides in the endosome membrane. The protein localises to the golgi apparatus membrane. Its function is as follows. A segment polarity gene required for wingless (wg)-dependent patterning processes, acting in both wg-sending cells and wg-target cells. In non-neuronal cells wls directs wg secretion. The wls traffic loop encompasses the Golgi, the cell surface, an endocytic compartment and a retrograde route leading back to the Golgi, and involves clathrin-mediated endocytosis and the retromer complex (a conserved protein complex consisting of Vps35 and Vps26). In neuronal cells (the larval motorneuron NMJ), the wg signal moves across the synapse via the release of wls-containing exosome-like vesicles. Postsynaptic wls is required for the trafficking of fz2 through the fz2-interacting protein Grip. This Drosophila pseudoobscura pseudoobscura (Fruit fly) protein is Protein wntless.